Reading from the N-terminus, the 458-residue chain is Light-independent protochlorophyllide reductase subunit N (458 aa).

Cys-20, Cys-45, and Cys-105 together coordinate [4Fe-4S] cluster.

It belongs to the BchN/ChlN family. As to quaternary structure, protochlorophyllide reductase is composed of three subunits; ChlL, ChlN and ChlB. Forms a heterotetramer of two ChlB and two ChlN subunits. [4Fe-4S] cluster is required as a cofactor.

It localises to the plastid. Its subcellular location is the chloroplast. It catalyses the reaction chlorophyllide a + oxidized 2[4Fe-4S]-[ferredoxin] + 2 ADP + 2 phosphate = protochlorophyllide a + reduced 2[4Fe-4S]-[ferredoxin] + 2 ATP + 2 H2O. Its pathway is porphyrin-containing compound metabolism; chlorophyll biosynthesis (light-independent). Component of the dark-operative protochlorophyllide reductase (DPOR) that uses Mg-ATP and reduced ferredoxin to reduce ring D of protochlorophyllide (Pchlide) to form chlorophyllide a (Chlide). This reaction is light-independent. The NB-protein (ChlN-ChlB) is the catalytic component of the complex. This Angiopteris evecta (Mule's foot fern) protein is Light-independent protochlorophyllide reductase subunit N.